The following is a 438-amino-acid chain: Thymidine phosphorylase (438 aa).

This sequence belongs to the thymidine/pyrimidine-nucleoside phosphorylase family. Homodimer.

It carries out the reaction thymidine + phosphate = 2-deoxy-alpha-D-ribose 1-phosphate + thymine. The protein operates within pyrimidine metabolism; dTMP biosynthesis via salvage pathway; dTMP from thymine: step 1/2. Functionally, the enzymes which catalyze the reversible phosphorolysis of pyrimidine nucleosides are involved in the degradation of these compounds and in their utilization as carbon and energy sources, or in the rescue of pyrimidine bases for nucleotide synthesis. This Burkholderia cenocepacia (strain ATCC BAA-245 / DSM 16553 / LMG 16656 / NCTC 13227 / J2315 / CF5610) (Burkholderia cepacia (strain J2315)) protein is Thymidine phosphorylase.